The primary structure comprises 204 residues: Ribonuclease HII (204 aa).

An RNase H type-2 domain is found at 17–204; sequence QLVAGVDEVG…KPVQQLLQGD (188 aa). Asp23, Glu24, and Asp115 together coordinate a divalent metal cation.

It belongs to the RNase HII family. The cofactor is Mn(2+). It depends on Mg(2+) as a cofactor.

The protein resides in the cytoplasm. It catalyses the reaction Endonucleolytic cleavage to 5'-phosphomonoester.. Its function is as follows. Endonuclease that specifically degrades the RNA of RNA-DNA hybrids. In Hahella chejuensis (strain KCTC 2396), this protein is Ribonuclease HII.